The sequence spans 205 residues: Large ribosomal subunit protein bL25 (205 aa).

Residues 184–205 (QPAGAVSEAAEGGEAAGETPAA) form a disordered region. The span at 186 to 205 (AGAVSEAAEGGEAAGETPAA) shows a compositional bias: low complexity.

The protein belongs to the bacterial ribosomal protein bL25 family. CTC subfamily. As to quaternary structure, part of the 50S ribosomal subunit; part of the 5S rRNA/L5/L18/L25 subcomplex. Contacts the 5S rRNA. Binds to the 5S rRNA independently of L5 and L18.

This is one of the proteins that binds to the 5S RNA in the ribosome where it forms part of the central protuberance. This Cupriavidus necator (strain ATCC 17699 / DSM 428 / KCTC 22496 / NCIMB 10442 / H16 / Stanier 337) (Ralstonia eutropha) protein is Large ribosomal subunit protein bL25.